Consider the following 1794-residue polypeptide: Non-reducing polyketide synthase nscA (1794 aa).

Positions aspartate 19–histidine 256 are N-terminal acylcarrier protein transacylase domain (SAT). Residues alanine 389 to aspartate 822 form the Ketosynthase family 3 (KS3) domain. Residues aspartate 428–glycine 440 are compositionally biased toward basic and acidic residues. A disordered region spans residues aspartate 428–threonine 448. Active-site for beta-ketoacyl synthase activity residues include cysteine 562, histidine 697, and histidine 740. The tract at residues threonine 927–glutamate 1230 is malonyl-CoA:ACP transacylase (MAT) domain. Residues threonine 1314–proline 1633 are product template (PT) domain. Positions histidine 1318–alanine 1454 are N-terminal hotdog fold. A PKS/mFAS DH domain is found at histidine 1318–aspartate 1628. Histidine 1350 acts as the Proton acceptor; for dehydratase activity in catalysis. Residues alanine 1482–aspartate 1628 are C-terminal hotdog fold. Catalysis depends on aspartate 1539, which acts as the Proton donor; for dehydratase activity. Residues serine 1637–aspartate 1719 form a disordered region. The segment covering glutamine 1644–lysine 1655 has biased composition (polar residues). A Carrier domain is found at serine 1717 to cysteine 1794. An O-(pantetheine 4'-phosphoryl)serine modification is found at serine 1754.

It depends on pantetheine 4'-phosphate as a cofactor.

Its pathway is secondary metabolite biosynthesis. Functionally, non-reducing polyketide synthase; part of the gene cluster that mediates the biosynthesis of neosartoricin, a prenylated anthracenone that exhibits T-cell antiproliferative activity, suggestive of a physiological role as an immunosuppressive agent. The non-reducing polyketide synthase nscA probably synthesizes and cyclizes the decaketide backbone. The hydrolase nscB then mediates the product release through hydrolysis followed by spontaneous decarboxylation. The prenyltransferase nscD catalyzes the addition of the dimethylallyl group to the aromatic C5. The FAD-dependent monooxygenase nscC is then responsible for the stereospecific hydroxylation at C2. There is no gene encoding O-acetyltransferase in the nsc gene cluster; thus, the last step of 2-O-acetylation leading to neosartoricin may be catalyzed by an unidentified O-acetyltransferase. The protein is Non-reducing polyketide synthase nscA of Aspergillus fumigatus (strain ATCC MYA-4609 / CBS 101355 / FGSC A1100 / Af293) (Neosartorya fumigata).